A 97-amino-acid chain; its full sequence is UPF0235 protein LHK_03181 (97 aa).

It belongs to the UPF0235 family.

The polypeptide is UPF0235 protein LHK_03181 (Laribacter hongkongensis (strain HLHK9)).